Consider the following 572-residue polypeptide: Oxygen-dependent choline dehydrogenase (572 aa).

An FAD-binding site is contributed by Asp-9–Glu-38. The active-site Proton acceptor is the His-477.

This sequence belongs to the GMC oxidoreductase family. The cofactor is FAD.

It carries out the reaction choline + A = betaine aldehyde + AH2. It catalyses the reaction betaine aldehyde + NAD(+) + H2O = glycine betaine + NADH + 2 H(+). It functions in the pathway amine and polyamine biosynthesis; betaine biosynthesis via choline pathway; betaine aldehyde from choline (cytochrome c reductase route): step 1/1. Functionally, involved in the biosynthesis of the osmoprotectant glycine betaine. Catalyzes the oxidation of choline to betaine aldehyde and betaine aldehyde to glycine betaine at the same rate. In Staphylococcus epidermidis (strain ATCC 35984 / DSM 28319 / BCRC 17069 / CCUG 31568 / BM 3577 / RP62A), this protein is Oxygen-dependent choline dehydrogenase.